Reading from the N-terminus, the 405-residue chain is Arginine biosynthesis bifunctional protein ArgJ (405 aa).

Substrate-binding residues include Thr-152, Lys-178, Thr-189, Glu-276, Asn-400, and Thr-405. The Nucleophile role is filled by Thr-189.

It belongs to the ArgJ family. In terms of assembly, heterotetramer of two alpha and two beta chains.

Its subcellular location is the cytoplasm. The catalysed reaction is N(2)-acetyl-L-ornithine + L-glutamate = N-acetyl-L-glutamate + L-ornithine. The enzyme catalyses L-glutamate + acetyl-CoA = N-acetyl-L-glutamate + CoA + H(+). Its pathway is amino-acid biosynthesis; L-arginine biosynthesis; L-ornithine and N-acetyl-L-glutamate from L-glutamate and N(2)-acetyl-L-ornithine (cyclic): step 1/1. It participates in amino-acid biosynthesis; L-arginine biosynthesis; N(2)-acetyl-L-ornithine from L-glutamate: step 1/4. Catalyzes two activities which are involved in the cyclic version of arginine biosynthesis: the synthesis of N-acetylglutamate from glutamate and acetyl-CoA as the acetyl donor, and of ornithine by transacetylation between N(2)-acetylornithine and glutamate. This is Arginine biosynthesis bifunctional protein ArgJ from Pseudomonas fluorescens (strain Pf0-1).